A 471-amino-acid polypeptide reads, in one-letter code: Ribulose bisphosphate carboxylase large chain (471 aa).

Lysine 5 carries the N6,N6,N6-trimethyllysine modification. Substrate is bound by residues asparagine 114 and threonine 164. Lysine 166 serves as the catalytic Proton acceptor. Lysine 168 serves as a coordination point for substrate. Residues lysine 192, aspartate 194, and glutamate 195 each coordinate Mg(2+). The residue at position 192 (lysine 192) is an N6-carboxylysine. Histidine 285 (proton acceptor) is an active-site residue. Positions 286, 318, and 370 each coordinate substrate.

Belongs to the RuBisCO large chain family. Type I subfamily. As to quaternary structure, heterohexadecamer of 8 large chains and 8 small chains; disulfide-linked. The disulfide link is formed within the large subunit homodimers. Mg(2+) serves as cofactor. In terms of processing, the disulfide bond which can form in the large chain dimeric partners within the hexadecamer appears to be associated with oxidative stress and protein turnover.

It localises to the plastid. It is found in the chloroplast. The enzyme catalyses 2 (2R)-3-phosphoglycerate + 2 H(+) = D-ribulose 1,5-bisphosphate + CO2 + H2O. The catalysed reaction is D-ribulose 1,5-bisphosphate + O2 = 2-phosphoglycolate + (2R)-3-phosphoglycerate + 2 H(+). Its function is as follows. RuBisCO catalyzes two reactions: the carboxylation of D-ribulose 1,5-bisphosphate, the primary event in carbon dioxide fixation, as well as the oxidative fragmentation of the pentose substrate in the photorespiration process. Both reactions occur simultaneously and in competition at the same active site. The protein is Ribulose bisphosphate carboxylase large chain of Deppea grandiflora.